A 401-amino-acid polypeptide reads, in one-letter code: tRNA(Met) cytidine acetate ligase (401 aa).

ATP contacts are provided by residues 7–20, Gly-102, Asn-164, and Arg-189; that span reads IVEY…HLYH.

The protein belongs to the TmcAL family.

The protein resides in the cytoplasm. It catalyses the reaction cytidine(34) in elongator tRNA(Met) + acetate + ATP = N(4)-acetylcytidine(34) in elongator tRNA(Met) + AMP + diphosphate. Its function is as follows. Catalyzes the formation of N(4)-acetylcytidine (ac(4)C) at the wobble position of elongator tRNA(Met), using acetate and ATP as substrates. First activates an acetate ion to form acetyladenylate (Ac-AMP) and then transfers the acetyl group to tRNA to form ac(4)C34. The sequence is that of tRNA(Met) cytidine acetate ligase from Caldanaerobacter subterraneus subsp. tengcongensis (strain DSM 15242 / JCM 11007 / NBRC 100824 / MB4) (Thermoanaerobacter tengcongensis).